Here is a 496-residue protein sequence, read N- to C-terminus: N-acetylmuramoyl-L-alanine amidase LytC (496 aa).

Residues 1–24 (MRSYIKVLTMCFLGLILFVPTALA) form the signal peptide. Repeat copies occupy residues 30–128 (RVGG…ISIK), 129–222 (RIAG…PSPT), and 223–318 (RISG…NPVV). Positions 30–318 (RVGGSNRYGT…VANQLKNPVV (289 aa)) are 3 X tandem repeats. In terms of domain architecture, MurNAc-LAA spans 322 to 490 (IFIDPGHGDQ…DKAAQAIHDG (169 aa)).

It belongs to the N-acetylmuramoyl-L-alanine amidase 3 family.

It is found in the secreted. Its subcellular location is the cell wall. It catalyses the reaction Hydrolyzes the link between N-acetylmuramoyl residues and L-amino acid residues in certain cell-wall glycopeptides.. In terms of biological role, autolysins are cell wall hydrolases involved in some important biological processes such as cell separation, cell-wall turnover, competence for genetic transformation, formation of the flagella - in particular of its basal body - and sporulation. Has a high affinity for teichoic acid-endowed peptidoglycan. LytC is required for efficient swarming motility but not at the level of cell separation or flagellum biosynthesis. Rather, LytC appears to be important for proper flagellar function. The protein is N-acetylmuramoyl-L-alanine amidase LytC (lytC) of Bacillus subtilis (strain 168).